The sequence spans 1024 residues: MTMITDSLAVVLQRRDWENPGVTQLNRLAAHPPFASWRNSEEARTDRPSQQLRSLNGEWRFAWFPAPEAVPESWLECDLPEADTVVVPSNWQMHGYDAPIYTNVTYPITVNPPFVPTENPTGCYSLTFNVDESWLQEGQTRIIFDGVNSAFHLWCNGRWVGYGQDSRLPSEFDLSAFLRAGENRLAVMVLRWSDGSYLEDQDMWRMSGIFRDVSLLHKPTTQISDFHVATRFNDDFSRAVLEAEVQMCGELRDYLRVTVSLWQGETQVASGTAPFGGEIIDERGSYADRVTLRLNVENPKLWSAEIPNLYRAVVELHTADGTLIEAEACDVGFREVRIENGLLLLNGKPLLIRGVNRHEHHPLHGQVMDEQTMVQDILLMKQNNFNAVRCSHYPNHPLWYTLCDRYGLYVVDEANIETHGMVPMNRLTDDPRWLPAMSERVTRMVQRDRNHPSVIIWSLGNESGHGANHDALYRWIKSVDPSRPVQYEGGGADTTATDIICPMYARVDEDQPFPAVPKWSIKKWLSLPGETRPLILCEYAHAMGNSLGGFAKYWQAFRQYPRLQGGFVWDWVDQSLIKYDENGNPWSAYGGDFGDTPNDRQFCMNGLVFADRTPHPALTEAKHQQQFFQFRLSGQTIEVTSEYLFRHSDNELLHWMVALDGKPLASGEVPLDVAPQGKQLIELPELPQPESAGQLWLTVRVVQPNATAWSEAGHISAWQQWRLAENLSVTLPSASHIIPQLTTSETDFCIELGNKRWQFNRQSGLLSQMWIGDEKQLLTPLRDQFTRAPLDNDIGVSEATRIDPNAWVERWKAAGHYQAEAALLQCTADTLADAVLITTAHAWQHQGKTLFISRKTYRIDGSGQMAITVDVEVASDTPHPARIGLTCQLAQVAERVNWLGLGPQENYPDRLTAACFDRWDVPLSDMYTPYVFPSENGLRCGTRELNYGSHQWRGDFQFNISRYSQQQLMETSHRHLLHAEEGTWLNIDGFHMGIGGDDSWSPSVSAEFQLSAGRYHYQLVWCQK.

Positions 103 and 202 each coordinate substrate. Asp-202 is a binding site for Na(+). Glu-417, His-419, and Glu-462 together coordinate Mg(2+). Substrate is bound by residues Glu-462 and 538–541 (EYAH). Glu-462 (proton donor) is an active-site residue. Glu-538 acts as the Nucleophile in catalysis. Asn-598 contributes to the Mg(2+) binding site. Positions 602 and 605 each coordinate Na(+). Residues Asn-605 and Trp-1000 each coordinate substrate.

This sequence belongs to the glycosyl hydrolase 2 family. In terms of assembly, homotetramer. It depends on Mg(2+) as a cofactor. The cofactor is Na(+).

It catalyses the reaction Hydrolysis of terminal non-reducing beta-D-galactose residues in beta-D-galactosides.. This Escherichia coli O9:H4 (strain HS) protein is Beta-galactosidase.